A 381-amino-acid polypeptide reads, in one-letter code: Succinyl-diaminopimelate desuccinylase (381 aa).

Position 72 (H72) interacts with Zn(2+). D74 is a catalytic residue. Residue D105 participates in Zn(2+) binding. The active-site Proton acceptor is the E139. Residues E140, E168, and H354 each contribute to the Zn(2+) site.

Belongs to the peptidase M20A family. DapE subfamily. Homodimer. Requires Zn(2+) as cofactor. It depends on Co(2+) as a cofactor.

It carries out the reaction N-succinyl-(2S,6S)-2,6-diaminopimelate + H2O = (2S,6S)-2,6-diaminopimelate + succinate. It participates in amino-acid biosynthesis; L-lysine biosynthesis via DAP pathway; LL-2,6-diaminopimelate from (S)-tetrahydrodipicolinate (succinylase route): step 3/3. Catalyzes the hydrolysis of N-succinyl-L,L-diaminopimelic acid (SDAP), forming succinate and LL-2,6-diaminopimelate (DAP), an intermediate involved in the bacterial biosynthesis of lysine and meso-diaminopimelic acid, an essential component of bacterial cell walls. This chain is Succinyl-diaminopimelate desuccinylase, found in Shewanella sp. (strain MR-7).